The following is a 232-amino-acid chain: Ubiquinone biosynthesis O-methyltransferase (232 aa).

Residues arginine 36, glycine 55, aspartate 76, and leucine 120 each coordinate S-adenosyl-L-methionine.

Belongs to the methyltransferase superfamily. UbiG/COQ3 family.

The enzyme catalyses a 3-demethylubiquinol + S-adenosyl-L-methionine = a ubiquinol + S-adenosyl-L-homocysteine + H(+). It carries out the reaction a 3-(all-trans-polyprenyl)benzene-1,2-diol + S-adenosyl-L-methionine = a 2-methoxy-6-(all-trans-polyprenyl)phenol + S-adenosyl-L-homocysteine + H(+). It participates in cofactor biosynthesis; ubiquinone biosynthesis. Its function is as follows. O-methyltransferase that catalyzes the 2 O-methylation steps in the ubiquinone biosynthetic pathway. This is Ubiquinone biosynthesis O-methyltransferase from Pseudomonas fluorescens (strain Pf0-1).